The primary structure comprises 503 residues: Beta-mannosyltransferase 4 (503 aa).

The Cytoplasmic segment spans residues 1–24 (MKLDTQQISHLLSRQMYHLAPRKK). A helical membrane pass occupies residues 25 to 45 (LLIWGGSLGFVLLLLIVASSH). The Extracellular segment spans residues 46 to 503 (QRIRSTILHR…QYCQRYGELH (458 aa)). An N-linked (GlcNAc...) asparagine glycan is attached at Asn-468.

It belongs to the BMT family.

Its subcellular location is the membrane. Functionally, beta-mannosyltransferase involved in cell wall biosynthesis. Responsible for addition of a hexose to the beta-mannose chain. This Komagataella phaffii (strain ATCC 76273 / CBS 7435 / CECT 11047 / NRRL Y-11430 / Wegner 21-1) (Yeast) protein is Beta-mannosyltransferase 4 (BMT4).